Reading from the N-terminus, the 459-residue chain is Glutamate--tRNA ligase 2 (459 aa).

The short motif at 8-18 (PSPTGYLHIGG) is the 'HIGH' region element. Residues 237 to 241 (KLSKR) carry the 'KMSKS' region motif. An ATP-binding site is contributed by Lys240.

This sequence belongs to the class-I aminoacyl-tRNA synthetase family. Glutamate--tRNA ligase type 1 subfamily. As to quaternary structure, monomer.

Its subcellular location is the cytoplasm. It carries out the reaction tRNA(Glu) + L-glutamate + ATP = L-glutamyl-tRNA(Glu) + AMP + diphosphate. Catalyzes the attachment of glutamate to tRNA(Glu) in a two-step reaction: glutamate is first activated by ATP to form Glu-AMP and then transferred to the acceptor end of tRNA(Glu). In Campylobacter curvus (strain 525.92), this protein is Glutamate--tRNA ligase 2.